A 319-amino-acid polypeptide reads, in one-letter code: Ribosomal protein uL3 glutamine methyltransferase (319 aa).

The protein belongs to the protein N5-glutamine methyltransferase family. PrmB subfamily.

It carries out the reaction L-glutaminyl-[ribosomal protein uL3] + S-adenosyl-L-methionine = N(5)-methyl-L-glutaminyl-[ribosomal protein uL3] + S-adenosyl-L-homocysteine + H(+). Its function is as follows. Methylates large ribosomal subunit protein uL3 on a specific glutamine residue. The protein is Ribosomal protein uL3 glutamine methyltransferase of Bradyrhizobium diazoefficiens (strain JCM 10833 / BCRC 13528 / IAM 13628 / NBRC 14792 / USDA 110).